The primary structure comprises 157 residues: Protein FAM218A (157 aa).

The interval Pro-104–Arg-127 is disordered.

The chain is Protein FAM218A (FAM218A) from Homo sapiens (Human).